The primary structure comprises 98 residues: Small ribosomal subunit protein uS19 (98 aa).

The disordered stretch occupies residues 77–98 (TRTFRGHAGGKAEKGGSAPRKK).

This sequence belongs to the universal ribosomal protein uS19 family.

In terms of biological role, protein S19 forms a complex with S13 that binds strongly to the 16S ribosomal RNA. The chain is Small ribosomal subunit protein uS19 from Chlorobium limicola (strain DSM 245 / NBRC 103803 / 6330).